We begin with the raw amino-acid sequence, 256 residues long: Imidazole glycerol phosphate synthase subunit HisF (256 aa).

Residues Asp12 and Asp131 contribute to the active site.

It belongs to the HisA/HisF family. Heterodimer of HisH and HisF.

The protein resides in the cytoplasm. The catalysed reaction is 5-[(5-phospho-1-deoxy-D-ribulos-1-ylimino)methylamino]-1-(5-phospho-beta-D-ribosyl)imidazole-4-carboxamide + L-glutamine = D-erythro-1-(imidazol-4-yl)glycerol 3-phosphate + 5-amino-1-(5-phospho-beta-D-ribosyl)imidazole-4-carboxamide + L-glutamate + H(+). The protein operates within amino-acid biosynthesis; L-histidine biosynthesis; L-histidine from 5-phospho-alpha-D-ribose 1-diphosphate: step 5/9. Its function is as follows. IGPS catalyzes the conversion of PRFAR and glutamine to IGP, AICAR and glutamate. The HisF subunit catalyzes the cyclization activity that produces IGP and AICAR from PRFAR using the ammonia provided by the HisH subunit. This chain is Imidazole glycerol phosphate synthase subunit HisF, found in Bifidobacterium longum (strain NCC 2705).